The primary structure comprises 647 residues: CRE-binding bZIP protein SKO1 (647 aa).

Disordered regions lie at residues 1–119, 135–204, 305–331, and 353–429; these read MSSE…GSKR, STTN…QMPG, TPTT…TSTK, and KENE…EEQE. Residues 51–85 are compositionally biased toward polar residues; that stretch reads RNNSTSTITQHSQRSTHSLNSIPEENGNSTVTDNS. Ser-94 bears the Phosphoserine mark. The residue at position 113 (Thr-113) is a Phosphothreonine. Low complexity-rich tracts occupy residues 138 to 194 and 305 to 329; these read NPSQ…SGNG and TPTT…PNTS. Composition is skewed to polar residues over residues 357–368 and 396–405; these read NLTTQIENNDQF and RKNSAVTTAP. At Ser-399 the chain carries Phosphoserine. A bZIP domain is found at 429-492; it reads ERKRKEFLER…PSSSSNSQFN (64 aa). Positions 430-451 are basic motif; that stretch reads RKRKEFLERNRVAASKFRKRKK. The segment at 454 to 461 is leucine-zipper; that stretch reads IKKIENDL. Residue Ser-558 is modified to Phosphoserine.

The protein belongs to the bZIP family.

It is found in the nucleus. Functionally, binds to the CRE motif 5'-TGACGTCA-3' and acts as a repressor of transcription of the SUC2 gene and most probably other genes. The polypeptide is CRE-binding bZIP protein SKO1 (SKO1) (Saccharomyces cerevisiae (strain ATCC 204508 / S288c) (Baker's yeast)).